We begin with the raw amino-acid sequence, 369 residues long: RAB6-interacting golgin (369 aa).

The tract at residues 1–128 is disordered; that stretch reads MAQGWAGFSE…HNNVEILPPK (128 aa). Positions 11–27 are enriched in basic and acidic residues; it reads EELRRLKQTKDPFEPQR. Composition is skewed to polar residues over residues 46-61 and 82-93; these read EQSQ…TSLL and SPTLPSHFTLTS. Basic and acidic residues predominate over residues 106–120; the sequence is QPKELGLENSHDGHN. Positions 145-297 form a coiled coil; that stretch reads RWEVLQQEQR…EVERLLHEQE (153 aa). A necessary for interaction with RCHY1 region spans residues 188–369; the sequence is IQKELQALDD…GNDISAALAT (182 aa). Residues 334 to 369 form a disordered region; the sequence is VSPKVDDQCGNSSSIPFLSPNCPNQEGNDISAALAT. Positions 342–361 are enriched in polar residues; sequence CGNSSSIPFLSPNCPNQEGN.

This sequence belongs to the GORAB family. In terms of assembly, interacts with SCYL1. Interacts with RCHY1 and RAB6A/RAB6.

The protein localises to the cytoplasm. The protein resides in the golgi apparatus. This is RAB6-interacting golgin (GORAB) from Homo sapiens (Human).